The following is a 386-amino-acid chain: MNISNIKIMLLGSGELGKEFIIAAQRLGIHTIAVDRYKNAPAMQVAHESYVIDMLNADALEQLILAKNPTYIVPEIEAINTDSLVKLEAHNFNIIPCAKATKLTMDRQGIRALAAQQLNLQTSKFAFANSEQEYLDVIQSIGLPFVIKPVMSSSGKGQSIVKEHNEIKKAWDYAQNGSRGHAKGVIVEQFIDFDYEITLLTVRHKDGTSFCDPIGHIQKDGDYRFSWQPHTMSDTALAKSQGIAKEITDALGGYGVFGVELFIKGDEVFFNEVSPRPHDTGMVTLISQNINEFELHLRAIVGLPIPDIQTLQPSASAAILLEGDTANASICGIDKALADANVDIRIFGKKEIHGKRRMGVVLTKAQNTHIALETSKQALAYIHLTK.

Residues 15 to 16 (EL) and E75 contribute to the N(1)-(5-phospho-beta-D-ribosyl)glycinamide site. ATP contacts are provided by residues R107, K148, 153-158 (SSGKGQ), 188-191 (EQFI), and E196. In terms of domain architecture, ATP-grasp spans 112-301 (ALAAQQLNLQ…EFELHLRAIV (190 aa)). Mg(2+)-binding residues include E260 and E272. N(1)-(5-phospho-beta-D-ribosyl)glycinamide is bound by residues D279, K349, and 356 to 357 (RR).

It belongs to the PurK/PurT family. Homodimer.

It catalyses the reaction N(1)-(5-phospho-beta-D-ribosyl)glycinamide + formate + ATP = N(2)-formyl-N(1)-(5-phospho-beta-D-ribosyl)glycinamide + ADP + phosphate + H(+). The protein operates within purine metabolism; IMP biosynthesis via de novo pathway; N(2)-formyl-N(1)-(5-phospho-D-ribosyl)glycinamide from N(1)-(5-phospho-D-ribosyl)glycinamide (formate route): step 1/1. Involved in the de novo purine biosynthesis. Catalyzes the transfer of formate to 5-phospho-ribosyl-glycinamide (GAR), producing 5-phospho-ribosyl-N-formylglycinamide (FGAR). Formate is provided by PurU via hydrolysis of 10-formyl-tetrahydrofolate. This is Formate-dependent phosphoribosylglycinamide formyltransferase from Francisella tularensis subsp. novicida (strain U112).